A 383-amino-acid polypeptide reads, in one-letter code: Protein delta homolog 2 (383 aa).

Residues 1–26 form the signal peptide; it reads MPSGCRCLHLVCLLCILGAPGQPVRA. EGF-like domains follow at residues 27-58, 62-89, 91-129, and 131-172; these read DDCS…LHCE, RMPG…KFCD, DEHI…RDCE, and KAGP…ARCE. The Extracellular portion of the chain corresponds to 27 to 306; it reads DDCSSHCDLA…RQEAGLGEPS (280 aa). Disulfide bonds link cysteine 29–cysteine 40, cysteine 33–cysteine 46, cysteine 48–cysteine 57, cysteine 66–cysteine 71, cysteine 79–cysteine 88, cysteine 95–cysteine 107, cysteine 101–cysteine 117, cysteine 119–cysteine 128, cysteine 135–cysteine 148, cysteine 142–cysteine 160, cysteine 162–cysteine 171, cysteine 178–cysteine 189, cysteine 183–cysteine 198, cysteine 200–cysteine 209, cysteine 216–cysteine 227, cysteine 221–cysteine 236, and cysteine 238–cysteine 247. The N-linked (GlcNAc...) asparagine glycan is linked to asparagine 157. The EGF-like 5; calcium-binding domain maps to 174-210; it reads NVDDCLMRPCANGATCLDGINRFSCLCPEGFAGRFCT. The 37-residue stretch at 212 to 248 folds into the EGF-like 6; calcium-binding domain; sequence NLDDCASRPCQRGARCRDRVHDFDCLCPSGYGGKTCE. The chain crosses the membrane as a helical span at residues 307 to 327; that stretch reads LVALVVFGALTAALVLATVLL. Residues 328-383 are Cytoplasmic-facing; it reads TLRAWRRGVCPPGPCCYPAPHYAPACQDQECQVSMLPAGLPLPRDLPPEPGKTTAL.

Its subcellular location is the membrane. In terms of biological role, regulates adipogenesis. This is Protein delta homolog 2 (DLK2) from Homo sapiens (Human).